The chain runs to 162 residues: MIELFMKQKMFSFKDAFHIYDRDEQETFKVEGRFFSLGDSLQMTDSSGKTLVSIEQKLMSLLPRYEISIGGKTVCEVTKKVTFSKPKFVISGLNWEIDGDLWRDEFQLTDGENVRMSVSKKWLSWGDSYHLQIAYEEDVLICTAIAIVLDMVLYNDEDESIF.

This sequence belongs to the LOR family.

This is an uncharacterized protein from Bacillus subtilis (strain 168).